The following is a 575-amino-acid chain: G protein-coupled receptor kinase 4 (575 aa).

At methionine 1 the chain carries N-acetylmethionine. The tract at residues 1–153 (MELENFMANT…DCAGVIYKYL (153 aa)) is N-terminal. Residues 51 to 171 (DFSSLCDQQP…QESTYYNRFL (121 aa)) form the RGS domain. The Protein kinase domain maps to 186–448 (FRQYRVLGKG…ASAVKQHPIF (263 aa)). ATP-binding positions include 192–200 (LGKGGFGEV) and lysine 215. Aspartate 311 acts as the Proton acceptor in catalysis. The AGC-kinase C-terminal domain occupies 449 to 514 (KDINFSRLEA…GCVTIPWQNE (66 aa)). The residue at position 484 (serine 484) is a Phosphoserine.

The protein belongs to the protein kinase superfamily. AGC Ser/Thr protein kinase family. GPRK subfamily. In terms of assembly, interacts with DRD3. Palmitoylated. In terms of tissue distribution, isoform GRK4A is expressed in testis. Isoform GRK4B is heterogeneously distributed in the kidney, with 20-fold enrichment in the outer medulla. Has a widespread but low level of expression in tissues other than testis.

It is found in the cytoplasm. It localises to the cell cortex. It catalyses the reaction [G-protein-coupled receptor] + ATP = [G-protein-coupled receptor]-phosphate + ADP + H(+). Inhibited by heparin. Its function is as follows. Specifically phosphorylates the activated forms of G protein-coupled receptors. Plays an important role in the regulation of renal sodium handling and blood pressure. The chain is G protein-coupled receptor kinase 4 (Grk4) from Rattus norvegicus (Rat).